The sequence spans 460 residues: Ammonium transporter 1 member 3 (460 aa).

Transmembrane regions (helical) follow at residues 15 to 37 (AIYLLFSAYLVFVMQLGFAMLCA), 50 to 72 (LTNVVDAVVGSLSYYLFGFAFAF), 98 to 117 (FFLYQWAFAIAVAGITSGSI), 124 to 146 (TAYLVFSFFLTGFVYPVVAHWLW), 166 to 188 (IDFAGSGVVHLVGGIAGFWGSIV), 209 to 227 (NATLVVLGTLLLWFGWFGF), 255 to 277 (AVTTTLAGSTAGIVTLFGRRLLV), 305 to 327 (PWAAILCGFCAAWVLIGLNILAL), 337 to 356 (AAQLHGGCGAWGLIFTGLFA), and 377 to 399 (GLILGGGWGLFGAQIVELLSIVV).

The protein belongs to the ammonia transporter channel (TC 1.A.11.2) family. Leaves.

Its subcellular location is the membrane. In terms of biological role, ammonium transporter that may be involved in ammonium transport throughout the plant. The chain is Ammonium transporter 1 member 3 (AMT1-3) from Solanum lycopersicum (Tomato).